The sequence spans 189 residues: dCTP deaminase (189 aa).

Residues 112–117 (KSTYAR), 136–138 (TLE), glutamine 157, tyrosine 171, and glutamine 181 contribute to the dCTP site. Glutamate 138 (proton donor/acceptor) is an active-site residue.

The protein belongs to the dCTP deaminase family. As to quaternary structure, homotrimer.

The enzyme catalyses dCTP + H2O + H(+) = dUTP + NH4(+). It participates in pyrimidine metabolism; dUMP biosynthesis; dUMP from dCTP (dUTP route): step 1/2. Its function is as follows. Catalyzes the deamination of dCTP to dUTP. This chain is dCTP deaminase, found in Paraburkholderia xenovorans (strain LB400).